We begin with the raw amino-acid sequence, 403 residues long: tRNA methyltransferase 10 homolog C (403 aa).

Residues 1–39 constitute a mitochondrion transit peptide; that stretch reads MAAFLKMSVSVNFFRPFTRFLVPFTLHRKRNNLTILQRY. Ser84 carries the phosphoserine modification. A coiled-coil region spans residues 138–169; the sequence is TKEKVKKARQIKKEMKAAAREEAKNIKLLETT. The SAM-dependent MTase TRM10-type domain maps to 191–383; sequence MGWKGAQAMQ…QFVPKRKHTG (193 aa).

This sequence belongs to the class IV-like SAM-binding methyltransferase superfamily. TRM10 family. As to quaternary structure, component of mitochondrial ribonuclease P, a complex composed of TRMT10C/MRPP1, HSD17B10/MRPP2 and PRORP/MRPP3. Interacts with HSD17B10/MRPP2; forming the MRPP1-MRPP2 subcomplex of the mitochondrial ribonuclease P complex. Interacts with GRSF1.

It is found in the mitochondrion matrix. Its subcellular location is the mitochondrion nucleoid. It carries out the reaction adenosine(9) in tRNA + S-adenosyl-L-methionine = N(1)-methyladenosine(9) in tRNA + S-adenosyl-L-homocysteine + H(+). The catalysed reaction is guanosine(9) in tRNA + S-adenosyl-L-methionine = N(1)-methylguanosine(9) in tRNA + S-adenosyl-L-homocysteine + H(+). The enzyme catalyses an adenosine in mRNA + S-adenosyl-L-methionine = an N(1)-methyladenosine in mRNA + S-adenosyl-L-homocysteine + H(+). Mitochondrial tRNA N(1)-methyltransferase involved in mitochondrial tRNA maturation. Component of mitochondrial ribonuclease P, a complex composed of TRMT10C/MRPP1, HSD17B10/MRPP2 and PRORP/MRPP3, which cleaves tRNA molecules in their 5'-ends. Together with HSD17B10/MRPP2, forms a subcomplex of the mitochondrial ribonuclease P, named MRPP1-MRPP2 subcomplex, which displays functions that are independent of the ribonuclease P activity. The MRPP1-MRPP2 subcomplex catalyzes the formation of N(1)-methylguanine and N(1)-methyladenine at position 9 (m1G9 and m1A9, respectively) in tRNAs; TRMT10C/MRPP1 acting as the catalytic N(1)-methyltransferase subunit. The MRPP1-MRPP2 subcomplex also acts as a tRNA maturation platform: following 5'-end cleavage by the mitochondrial ribonuclease P complex, the MRPP1-MRPP2 subcomplex enhances the efficiency of 3'-processing catalyzed by ELAC2, retains the tRNA product after ELAC2 processing and presents the nascent tRNA to the mitochondrial CCA tRNA nucleotidyltransferase TRNT1 enzyme. In addition to tRNA N(1)-methyltransferase activity, TRMT10C/MRPP1 also acts as a mRNA N(1)-methyltransferase by mediating methylation of adenosine residues at the N(1) position of MT-ND5 mRNA. Associates with mitochondrial DNA complexes at the nucleoids to initiate RNA processing and ribosome assembly. This Homo sapiens (Human) protein is tRNA methyltransferase 10 homolog C.